Here is a 377-residue protein sequence, read N- to C-terminus: DNA replication and repair protein RecF (377 aa).

Residue 30-37 (GPNGQGKT) participates in ATP binding.

The protein belongs to the RecF family.

It is found in the cytoplasm. Its function is as follows. The RecF protein is involved in DNA metabolism; it is required for DNA replication and normal SOS inducibility. RecF binds preferentially to single-stranded, linear DNA. It also seems to bind ATP. The sequence is that of DNA replication and repair protein RecF from Thermobifida fusca (strain YX).